The sequence spans 515 residues: 2-isopropylmalate synthase (515 aa).

Residues 4 to 266 enclose the Pyruvate carboxyltransferase domain; the sequence is IKFFDTTLRD…ETRLNLQEIK (263 aa). Mn(2+) is bound by residues D13, H201, H203, and N237. The interval 391 to 515 is regulatory domain; sequence QLSSIQVQYG…RAENEKVTTP (125 aa).

Belongs to the alpha-IPM synthase/homocitrate synthase family. LeuA type 1 subfamily. In terms of assembly, homodimer. Requires Mn(2+) as cofactor.

The protein resides in the cytoplasm. The catalysed reaction is 3-methyl-2-oxobutanoate + acetyl-CoA + H2O = (2S)-2-isopropylmalate + CoA + H(+). It participates in amino-acid biosynthesis; L-leucine biosynthesis; L-leucine from 3-methyl-2-oxobutanoate: step 1/4. Catalyzes the condensation of the acetyl group of acetyl-CoA with 3-methyl-2-oxobutanoate (2-ketoisovalerate) to form 3-carboxy-3-hydroxy-4-methylpentanoate (2-isopropylmalate). This is 2-isopropylmalate synthase from Geobacillus thermodenitrificans (strain NG80-2).